The sequence spans 277 residues: UPF0496 protein At3g48650 (277 aa).

The next 2 helical transmembrane spans lie at 124–144 (YIFFAAALLSVLALWIYLGAV) and 145–165 (SLVVAAKVVIEVATPSIAPLW).

This sequence belongs to the UPF0496 family.

It localises to the membrane. This Arabidopsis thaliana (Mouse-ear cress) protein is UPF0496 protein At3g48650.